Here is a 401-residue protein sequence, read N- to C-terminus: MTRPDLNERILSLRKLRLAQCRTRTRRTIERRNGVRLEINGSWLVEFCSNDYLGLAQHFEIIAALQDAAARNGIGATASHLICGHHAIHKALEYELAEWLGYPRALLFGSGFTANLAVQQALLTKENDICVQDRLNHASLIDATRLAGCRLRRYPHLDVDGAAHQLKNAPEGAAMLATDGIFSMDGDIAPLRALSLVARTQQALMYVDDAHGIGVTGPQGRGCIAAAWLSVEEVPLQLVTLSKALGGYGAAVLGSATLIQHLAETARPYIYTTALPPAQAAAALTAIRIARRDEWRRQRLQELVERFRENSRRHGLEIMDSETPIQPLQCGDETTTMAMSAALEREGFLVNAIRPPTVPEGKSRLRVTLSALHTTEQIDTLVQALARSRDALATEAAPVKV.

Arg-24 is a substrate binding site. 111–112 (GF) serves as a coordination point for pyridoxal 5'-phosphate. His-137 serves as a coordination point for substrate. Pyridoxal 5'-phosphate contacts are provided by Ser-183, His-211, and Thr-240. The residue at position 243 (Lys-243) is an N6-(pyridoxal phosphate)lysine. Residue Thr-357 coordinates substrate.

This sequence belongs to the class-II pyridoxal-phosphate-dependent aminotransferase family. BioF subfamily. In terms of assembly, homodimer. Requires pyridoxal 5'-phosphate as cofactor.

It carries out the reaction 6-carboxyhexanoyl-[ACP] + L-alanine + H(+) = (8S)-8-amino-7-oxononanoate + holo-[ACP] + CO2. The protein operates within cofactor biosynthesis; biotin biosynthesis. Catalyzes the decarboxylative condensation of pimeloyl-[acyl-carrier protein] and L-alanine to produce 8-amino-7-oxononanoate (AON), [acyl-carrier protein], and carbon dioxide. This Xylella fastidiosa (strain M23) protein is 8-amino-7-oxononanoate synthase.